A 510-amino-acid chain; its full sequence is Conditioned medium factor receptor 1 (510 aa).

Topologically, residues 1–36 are cytoplasmic; sequence MDSKYIQKTLSAITEQITKNAAVQKVLDNKFVKEHK. A helical membrane pass occupies residues 37–55; the sequence is YAAAAATVGLGVVAATTIV. The Extracellular segment spans residues 56-510; sequence KAVNCEGKRY…QGKKQIKKLD (455 aa).

It localises to the membrane. Functionally, receptor for cmfA, that appears to mediate the G-independent cmfA signal transduction. The protein is Conditioned medium factor receptor 1 (cmfB) of Dictyostelium discoideum (Social amoeba).